The sequence spans 449 residues: C4-dicarboxylate transport protein 1 (449 aa).

9 helical membrane passes run 14 to 34 (SIFL…VGIP), 47 to 67 (FIKL…VNGI), 83 to 103 (SVIY…VVAY), 157 to 177 (ILQV…VGEQ), 195 to 215 (IMGM…AFTT), 226 to 246 (LGAL…AVLG), 312 to 332 (FSIY…TPLA), 359 to 379 (VILA…LVLV), and 385 to 405 (FMGI…TVTI).

Belongs to the dicarboxylate/amino acid:cation symporter (DAACS) (TC 2.A.23) family.

Its subcellular location is the cell inner membrane. In terms of biological role, responsible for the transport of dicarboxylates such as succinate, fumarate, and malate from the periplasm across the membrane. The polypeptide is C4-dicarboxylate transport protein 1 (Pseudomonas aeruginosa (strain UCBPP-PA14)).